The following is a 284-amino-acid chain: MLIIETVPLLRQQIRRLRMEGKRIALVPTMGNLHDGHMKLVDEAKASADAVVVSIFVNPMQFDRADDLARYPRTLQEDCEKLKKRGADFVFAPTPEEVYPQGMSDQTYVDVPGLSTMLEGASRPGHFRGVSTVVSKLFNLVQPDVACFGEKDYQQLALIRKMTADMGYDIEIIGVPTVRAKDGLALSSRNGYLTSDQRKIAPGLSKVMNTMAEKLRAGERDLEAIIAAASEALSEKGFRPDDLQIRDADTLQALSPASQRAVILMAAWLGQARLIDNQTVELTQ.

Residue 30–37 (MGNLHDGH) participates in ATP binding. Residue histidine 37 is the Proton donor of the active site. Glutamine 61 is a binding site for (R)-pantoate. Glutamine 61 provides a ligand contact to beta-alanine. 149-152 (GEKD) provides a ligand contact to ATP. Glutamine 155 provides a ligand contact to (R)-pantoate. Residues valine 178 and 186–189 (LSSR) each bind ATP.

It belongs to the pantothenate synthetase family. Homodimer.

The protein resides in the cytoplasm. It catalyses the reaction (R)-pantoate + beta-alanine + ATP = (R)-pantothenate + AMP + diphosphate + H(+). The protein operates within cofactor biosynthesis; (R)-pantothenate biosynthesis; (R)-pantothenate from (R)-pantoate and beta-alanine: step 1/1. Its function is as follows. Catalyzes the condensation of pantoate with beta-alanine in an ATP-dependent reaction via a pantoyl-adenylate intermediate. This is Pantothenate synthetase from Cronobacter sakazakii (strain ATCC BAA-894) (Enterobacter sakazakii).